The following is a 239-amino-acid chain: MKSIPGDIPQYLLIKAQLQARIQSGALKSGDKLPSERELCAIFNTTRITIRESLAQLESSGLIWRADRRGWFVTPERLWLDPTQNTNFHKLCREQGREPKTALLSGVLTTVPVEVMEPLQLQPFDQIYLLTRLRYADGRAVCYCENHCLPARVPELLQYDLNGSLTEVYESYYNLVYTSMHLSFYPTAMPAQAAQALGVMEGRPALLLRRLNYDQHGRVLDLDIEYWRHDSLRIEVDTH.

Positions Ile-8–Glu-76 constitute an HTH gntR-type domain. The H-T-H motif DNA-binding region spans Glu-36–Ala-55.

The polypeptide is Putative transcriptional regulator of 2-aminoethylphosphonate degradation operons (phnR) (Salmonella paratyphi A (strain ATCC 9150 / SARB42)).